The primary structure comprises 172 residues: Oleosin 18 kDa (172 aa).

Ala-2 carries the N-acetylalanine modification. A polar region spans residues 2–38; sequence ADRDRAGQYYQQQRGQVGETVKGILPEKAPSASQALT. The segment at 39-110 is hydrophobic; the sequence is VATLFPLGGL…GGLSSLTFLA (72 aa). The next 3 membrane-spanning stretches (helical) occupy residues 42–62, 70–90, and 91–111; these read LFPL…ASVV, VFLI…LAVA, and GFLT…FLAN. Residues 147–172 are disordered; sequence HAIQGRADQAGTGAGAGGGAGTKTSS. The span at 158–172 shows a compositional bias: gly residues; that stretch reads TGAGAGGGAGTKTSS.

The protein belongs to the oleosin family.

Its subcellular location is the lipid droplet. The protein resides in the membrane. Its function is as follows. May have a structural role to stabilize the lipid body during desiccation of the seed by preventing coalescence of the oil. Probably interacts with both lipid and phospholipid moieties of lipid bodies. May also provide recognition signals for specific lipase anchorage in lipolysis during seedling growth. In Oryza sativa subsp. indica (Rice), this protein is Oleosin 18 kDa (OLE18).